The chain runs to 164 residues: Glutaredoxin-2, mitochondrial (164 aa).

The N-terminal 19 residues, 1 to 19, are a transit peptide targeting the mitochondrion; sequence MIWRRAALAGTRLVWSRSG. Serine 20 is subject to Phosphoserine. One can recognise a Glutaredoxin domain in the interval 57-157; the sequence is VNQIQETISD…PLVHQCYLKK (101 aa). Cysteine 68 provides a ligand contact to [2Fe-2S] cluster. Residue lysine 74 coordinates glutathione. Cysteine 77 is subject to S-glutathionyl cysteine; alternate. Cysteines 77 and 80 form a disulfide. Glutathione is bound by residues glutamine 109 and valine 121. Residue cysteine 153 participates in [2Fe-2S] cluster binding.

The protein belongs to the glutaredoxin family. Monomer; active form. Homodimer; inactive form. The homodimer is probably linked by 1 2Fe-2S cluster. In terms of tissue distribution, widely expressed. Expressed in brain, heart, skeletal muscle, colon, thymus, spleen, kidney, liver, small intestine, placenta and lung. Not expressed in peripheral blood leukocytes.

It localises to the mitochondrion. The protein localises to the nucleus. Its activity is regulated as follows. The 2Fe-2S present in the homodimer leads to inactivation of the enzyme. The 2Fe-2S may serve as a redox sensor: the presence of one-electron oxidants or reductants leading to the loss of the 2Fe-2S cluster, subsequent monomerization and activation of the enzyme. Unlike other glutaredoxins, it is not inhibited by oxidation of structural Cys residues. Functionally, glutathione-dependent oxidoreductase that facilitates the maintenance of mitochondrial redox homeostasis upon induction of apoptosis by oxidative stress. Involved in response to hydrogen peroxide and regulation of apoptosis caused by oxidative stress. Acts as a very efficient catalyst of monothiol reactions because of its high affinity for protein glutathione-mixed disulfides. Can receive electrons not only from glutathione (GSH), but also from thioredoxin reductase supporting both monothiol and dithiol reactions. Efficiently catalyzes both glutathionylation and deglutathionylation of mitochondrial complex I, which in turn regulates the superoxide production by the complex. Overexpression decreases the susceptibility to apoptosis and prevents loss of cardiolipin and cytochrome c release. This chain is Glutaredoxin-2, mitochondrial (GLRX2), found in Homo sapiens (Human).